Here is a 184-residue protein sequence, read N- to C-terminus: Pyridoxal 5'-phosphate synthase subunit PdxT (184 aa).

46–48 (GES) is an L-glutamine binding site. The Nucleophile role is filled by C75. L-glutamine contacts are provided by residues R101 and 129 to 130 (IR). Residues H165 and E167 each act as charge relay system in the active site.

This sequence belongs to the glutaminase PdxT/SNO family. In the presence of PdxS, forms a dodecamer of heterodimers. Only shows activity in the heterodimer.

The catalysed reaction is aldehydo-D-ribose 5-phosphate + D-glyceraldehyde 3-phosphate + L-glutamine = pyridoxal 5'-phosphate + L-glutamate + phosphate + 3 H2O + H(+). It catalyses the reaction L-glutamine + H2O = L-glutamate + NH4(+). It functions in the pathway cofactor biosynthesis; pyridoxal 5'-phosphate biosynthesis. Functionally, catalyzes the hydrolysis of glutamine to glutamate and ammonia as part of the biosynthesis of pyridoxal 5'-phosphate. The resulting ammonia molecule is channeled to the active site of PdxS. This is Pyridoxal 5'-phosphate synthase subunit PdxT from Staphylococcus haemolyticus (strain JCSC1435).